The primary structure comprises 384 residues: Sodium channel protein Nach (384 aa).

Over Ala-1–Ser-319 the chain is Extracellular. 2 N-linked (GlcNAc...) asparagine glycosylation sites follow: Asn-32 and Asn-215. Residues Leu-320–Leu-340 traverse the membrane as a helical segment. At Arg-341–Asn-384 the chain is on the cytoplasmic side.

Belongs to the amiloride-sensitive sodium channel (TC 1.A.6) family.

The protein localises to the membrane. Its function is as follows. Part of a complex that plays a role in tracheal liquid clearance. Probable role in sodium transport. The protein is Sodium channel protein Nach (Nach) of Drosophila virilis (Fruit fly).